We begin with the raw amino-acid sequence, 274 residues long: Diaminopimelate epimerase (274 aa).

Substrate is bound by residues Asn-11, Gln-44, and Asn-64. Cys-73 acts as the Proton donor in catalysis. Substrate-binding positions include 74-75 (GN), Asn-157, Asn-190, and 208-209 (ER). The active-site Proton acceptor is Cys-217. 218 to 219 (GS) is a substrate binding site.

The protein belongs to the diaminopimelate epimerase family. In terms of assembly, homodimer.

It is found in the cytoplasm. The enzyme catalyses (2S,6S)-2,6-diaminopimelate = meso-2,6-diaminopimelate. Its pathway is amino-acid biosynthesis; L-lysine biosynthesis via DAP pathway; DL-2,6-diaminopimelate from LL-2,6-diaminopimelate: step 1/1. Functionally, catalyzes the stereoinversion of LL-2,6-diaminopimelate (L,L-DAP) to meso-diaminopimelate (meso-DAP), a precursor of L-lysine and an essential component of the bacterial peptidoglycan. The sequence is that of Diaminopimelate epimerase from Glaesserella parasuis serovar 5 (strain SH0165) (Haemophilus parasuis).